The sequence spans 120 residues: U13-lycotoxin-Ls1d (120 aa).

A signal peptide spans 1–16; sequence MKILFVLISILYAVYC. Positions 17 to 54 are excised as a propeptide; the sequence is FSSEEDVDSAYLANELEPVEDINSEQYAALEPKEEQER. Disulfide bonds link C56/C70, C63/C76, C69/C87, and C78/C85. The region spanning 56–95 is the Agouti domain; sequence CADMGQDCKDDCDCCLNIATCNCRFGRYFCSCTFGDYQTC.

It belongs to the neurotoxin 05 (agouti) family. In terms of processing, contains 6 disulfide bonds. As to expression, expressed by the venom gland.

Its subcellular location is the secreted. The polypeptide is U13-lycotoxin-Ls1d (Lycosa singoriensis (Wolf spider)).